The primary structure comprises 200 residues: Large ribosomal subunit protein uL4 (200 aa).

The disordered stretch occupies residues Arg-43–Ile-72.

It belongs to the universal ribosomal protein uL4 family. As to quaternary structure, part of the 50S ribosomal subunit.

Functionally, one of the primary rRNA binding proteins, this protein initially binds near the 5'-end of the 23S rRNA. It is important during the early stages of 50S assembly. It makes multiple contacts with different domains of the 23S rRNA in the assembled 50S subunit and ribosome. Forms part of the polypeptide exit tunnel. The chain is Large ribosomal subunit protein uL4 from Haemophilus ducreyi (strain 35000HP / ATCC 700724).